We begin with the raw amino-acid sequence, 528 residues long: uncharacterized protein (528 aa).

2 stretches are compositionally biased toward basic residues: residues 1-16 and 25-43; these read MGKA…KNHL and QLAR…SHTK. The disordered stretch occupies residues 1–59; it reads MGKASKATKKFTKNHLKNTIERRKQLARSKKVYGTKNRNSHTKNKLESGTNDNNKNKED.

The protein belongs to the NOC2 family.

It is found in the nucleus. Its subcellular location is the nucleolus. This is an uncharacterized protein from Schizosaccharomyces pombe (strain 972 / ATCC 24843) (Fission yeast).